Reading from the N-terminus, the 402-residue chain is CCA-adding enzyme (402 aa).

Residues G32 and R35 each coordinate ATP. G32 and R35 together coordinate CTP. Mg(2+)-binding residues include D45 and D47. The ATP site is built by R116, D159, R162, R165, and R168. Residues R116, D159, R162, R165, and R168 each coordinate CTP.

The protein belongs to the tRNA nucleotidyltransferase/poly(A) polymerase family. Bacterial CCA-adding enzyme type 3 subfamily. In terms of assembly, homodimer. Mg(2+) is required as a cofactor.

It carries out the reaction a tRNA precursor + 2 CTP + ATP = a tRNA with a 3' CCA end + 3 diphosphate. The enzyme catalyses a tRNA with a 3' CCA end + 2 CTP + ATP = a tRNA with a 3' CCACCA end + 3 diphosphate. Catalyzes the addition and repair of the essential 3'-terminal CCA sequence in tRNAs without using a nucleic acid template. Adds these three nucleotides in the order of C, C, and A to the tRNA nucleotide-73, using CTP and ATP as substrates and producing inorganic pyrophosphate. tRNA 3'-terminal CCA addition is required both for tRNA processing and repair. Also involved in tRNA surveillance by mediating tandem CCA addition to generate a CCACCA at the 3' terminus of unstable tRNAs. While stable tRNAs receive only 3'-terminal CCA, unstable tRNAs are marked with CCACCA and rapidly degraded. This Streptococcus agalactiae serotype III (strain NEM316) protein is CCA-adding enzyme.